Consider the following 703-residue polypeptide: Prolyl 3-hydroxylase 2 (703 aa).

The first 21 residues, 1-21 (MRESTWVSLLLLLLLPAPQRG), serve as a signal peptide directing secretion. The tract at residues 18-40 (PQRGGPQDGRGSPEPEPERGPLQ) is disordered. TPR repeat units follow at residues 42–75 (FDLLYASGVAAYYSGDYEGAVRDLEAALRSHRRL), 144–177 (RVPYNYLQRAYIKLNQLDKAMEAAHTFFMANPEH), 205–238 (HLESYNAGVKHYEADDFEAAIKYFEQALREYFNE), and 301–334 (PLHYDYLQFAYYRVGEYVKALECAKAYLMFHPDD). Asparagine 444, asparagine 455, and asparagine 544 each carry an N-linked (GlcNAc...) asparagine glycan. Residues 552–666 (THMVCRTALS…RCAVALWFTL (115 aa)) enclose the Fe2OG dioxygenase domain. Residues histidine 575, aspartate 577, and histidine 647 each contribute to the Fe cation site. Arginine 657 is a catalytic residue. Residues 700–703 (KDEL) carry the Prevents secretion from ER motif.

The protein belongs to the leprecan family. The cofactor is Fe cation. L-ascorbate serves as cofactor. Detected at low levels in cartilage.

The protein localises to the endoplasmic reticulum. It localises to the sarcoplasmic reticulum. The protein resides in the golgi apparatus. The enzyme catalyses L-prolyl-[collagen] + 2-oxoglutarate + O2 = trans-3-hydroxy-L-prolyl-[collagen] + succinate + CO2. Functionally, prolyl 3-hydroxylase that catalyzes the post-translational formation of 3-hydroxyproline on collagens. Contributes to proline 3-hydroxylation of collagen COL4A1 and COL1A1 in tendons, the eye sclera and in the eye lens capsule. Has high activity with the type IV collagen COL4A1, and lower activity with COL1A1. Catalyzes hydroxylation of the first Pro in Gly-Pro-Hyp sequences where Hyp is 4-hydroxyproline. Has no activity on substrates that lack 4-hydroxyproline in the third position. The chain is Prolyl 3-hydroxylase 2 from Rattus norvegicus (Rat).